Consider the following 27-residue polypeptide: Ranatuerin-2Cb (27 aa).

Cys-20 and Cys-25 are oxidised to a cystine.

As to expression, expressed by the skin glands.

The protein resides in the secreted. In terms of biological role, antibacterial activity against Gram-positive bacterium S.aureus (MIC=40 uM) and Gram-negative bacterium E.coli (MIC=2 uM). Has activity against C.albicans (MIC=46 uM). The sequence is that of Ranatuerin-2Cb from Lithobates clamitans (Green frog).